Here is an 870-residue protein sequence, read N- to C-terminus: MPTNSYRFLVASEDIYFQNTLQQSITFSDPESIKVLKDFYHSNSRPTLTNKDFLIVYRKEKEKDTKKKNSSVIKFPRNDFNSFEDSKNDIQNQAKILNGKVGDFENSLLPRIYDLDELSKYASLARIQSYRAKTSPDKSEWQTVILDFIVTEKVQLVELINDPQNPKVGQIIIKPVRETIKSPEIHINLINDLLEMARKAKNFRIPTELLLIVDKFGANSEYSTNEYIKGVTNTLSCSPSLTYPQKYQLFSYNSYPAKIKKLYEHIHTFAEQIKLEDEINVILKTNLDKQQTEFILKEKIKAIRKKLGEDSRYEDEIEELLHSELGKKVFPKEVAKTIMRETNKLKSMIVTSPESNITKSYLDLLVALPWKKVKKDILDIKNVREKLEEAHYGLDEIKKRIIEYLAALIHRRSQSEGKPELEKVGSDYIDSNLFLSHKIRKVRSNSIPILTLVGPPGTGKTSIAMAVAEAIGKEFVKISLGGIRDEAEIRGHRRTYVGALPGKIIQALKKVGVSNPLILLDEIDKMGADFKGDPSAAMLEVLDPEQNRFFQDHYLELEYDLSQVLFVATANEIYDIPEPLLDRVEIIELSSYTFIEKIQIAKSHLIPAVLKENALDPKYFPIQDQTIDFLIRHYTREAGVRGLKRVIDKIVRKIIVKLLEKTLDQNFVIDIEFVRELLGIEKYDPDNVDSSPQIGTVTGLGYSPLGGSTLQIEVSTIPGRGDIKLTGSLKDVMQESARIALSYVQSKAKDFGINFDFENTLIHIHVPEGAIPKDGPSAGITFATAIISALSQKPVSHNIAMTGEITLRGKVLAIGGLKEKTMGAYKNGIKIIFIPKANEKNLVDIPQEVKDVIQFIPVDTYQQIYDFIFK.

A Lon N-terminal domain is found at 1 to 270 (MPTNSYRFLV…KLYEHIHTFA (270 aa)). 454–461 (GPPGTGKT) provides a ligand contact to ATP. Residues 691-870 (SPQIGTVTGL…YQQIYDFIFK (180 aa)) enclose the Lon proteolytic domain. Active-site residues include serine 777 and lysine 820.

It belongs to the peptidase S16 family. As to quaternary structure, homohexamer. Organized in a ring with a central cavity.

It localises to the cytoplasm. The enzyme catalyses Hydrolysis of proteins in presence of ATP.. In terms of biological role, ATP-dependent serine protease that mediates the selective degradation of mutant and abnormal proteins as well as certain short-lived regulatory proteins. Required for cellular homeostasis and for survival from DNA damage and developmental changes induced by stress. Degrades polypeptides processively to yield small peptide fragments that are 5 to 10 amino acids long. Binds to DNA in a double-stranded, site-specific manner. The sequence is that of Lon protease from Mesomycoplasma hyopneumoniae (strain 232) (Mycoplasma hyopneumoniae).